Reading from the N-terminus, the 27-residue chain is uncharacterized protein (27 aa).

The protein localises to the mitochondrion. This is an uncharacterized protein from Emericella nidulans (Aspergillus nidulans).